The chain runs to 124 residues: Quinol oxidase subunit 4 (124 aa).

Helical transmembrane passes span 16 to 36 (IVGF…AVYT), 44 to 64 (LWII…MFMH), and 78 to 98 (TLFG…IFAA).

The protein belongs to the cytochrome c oxidase bacterial subunit 4 family.

The protein resides in the cell membrane. It catalyses the reaction 2 a quinol + O2 = 2 a quinone + 2 H2O. In terms of biological role, catalyzes quinol oxidation with the concomitant reduction of oxygen to water. Major component for energy conversion during vegetative growth. The sequence is that of Quinol oxidase subunit 4 (qoxD) from Bacillus spizizenii (strain ATCC 23059 / NRRL B-14472 / W23) (Bacillus subtilis subsp. spizizenii).